A 157-amino-acid polypeptide reads, in one-letter code: 2-C-methyl-D-erythritol 2,4-cyclodiphosphate synthase (157 aa).

The a divalent metal cation site is built by aspartate 9 and histidine 11. Residues 9 to 11 and 35 to 36 contribute to the 4-CDP-2-C-methyl-D-erythritol 2-phosphate site; these read DVH and HS. Histidine 43 contacts a divalent metal cation. 4-CDP-2-C-methyl-D-erythritol 2-phosphate-binding positions include 57–59, 62–66, 101–107, 133–136, phenylalanine 140, and arginine 143; these read DIG, FPDTD, AEKPKMA, and TTTE.

This sequence belongs to the IspF family. Homotrimer. Requires a divalent metal cation as cofactor.

The enzyme catalyses 4-CDP-2-C-methyl-D-erythritol 2-phosphate = 2-C-methyl-D-erythritol 2,4-cyclic diphosphate + CMP. It participates in isoprenoid biosynthesis; isopentenyl diphosphate biosynthesis via DXP pathway; isopentenyl diphosphate from 1-deoxy-D-xylulose 5-phosphate: step 4/6. In terms of biological role, involved in the biosynthesis of isopentenyl diphosphate (IPP) and dimethylallyl diphosphate (DMAPP), two major building blocks of isoprenoid compounds. Catalyzes the conversion of 4-diphosphocytidyl-2-C-methyl-D-erythritol 2-phosphate (CDP-ME2P) to 2-C-methyl-D-erythritol 2,4-cyclodiphosphate (ME-CPP) with a corresponding release of cytidine 5-monophosphate (CMP). This is 2-C-methyl-D-erythritol 2,4-cyclodiphosphate synthase from Listeria monocytogenes serotype 4b (strain F2365).